The primary structure comprises 173 residues: Peptide methionine sulfoxide reductase MsrA (173 aa).

Cys-10 is an active-site residue.

It belongs to the MsrA Met sulfoxide reductase family.

It catalyses the reaction L-methionyl-[protein] + [thioredoxin]-disulfide + H2O = L-methionyl-(S)-S-oxide-[protein] + [thioredoxin]-dithiol. The catalysed reaction is [thioredoxin]-disulfide + L-methionine + H2O = L-methionine (S)-S-oxide + [thioredoxin]-dithiol. In terms of biological role, has an important function as a repair enzyme for proteins that have been inactivated by oxidation. Catalyzes the reversible oxidation-reduction of methionine sulfoxide in proteins to methionine. This chain is Peptide methionine sulfoxide reductase MsrA, found in Nautilia profundicola (strain ATCC BAA-1463 / DSM 18972 / AmH).